The primary structure comprises 329 residues: MDPTTPAWRTESTTMNGNDQALPLLCGKEILISVFLILFIALVGLVGNGFVLWLLGFRMRRNAFSVYVLSLAGADFLFLCFQIINCLVYLSNFFCSSSINFPSFFTTVMTCAYLAGLSMLSTISTERCLSVLWPIWYRCRRPRHLSAVACVLLWALSLLLSILEGKFCGLFGDGDSGWCQTFDLITAAWLIFLFMVLCGSSLALLVRILCGSRGLPLTRLYLTILLTVLVFLLCGLPFGIQWFLILWIWKNSDVLFCHIHPVSVVLSSLNSSANPIIYFFVGSFRKQWQLQQPILKLALQRALQDIAEVDHSEGCFRQGTPEMSRSSLV.

Residues 1-33 (MDPTTPAWRTESTTMNGNDQALPLLCGKEILIS) lie on the Extracellular side of the membrane. A helical transmembrane segment spans residues 34-54 (VFLILFIALVGLVGNGFVLWL). Residues 55–63 (LGFRMRRNA) are Cytoplasmic-facing. The chain crosses the membrane as a helical span at residues 64–84 (FSVYVLSLAGADFLFLCFQII). Residues 85 to 96 (NCLVYLSNFFCS) are Extracellular-facing. Residues 97 to 117 (SSINFPSFFTTVMTCAYLAGL) traverse the membrane as a helical segment. The Cytoplasmic segment spans residues 118–144 (SMLSTISTERCLSVLWPIWYRCRRPRH). The helical transmembrane segment at 145–165 (LSAVACVLLWALSLLLSILEG) threads the bilayer. Residues 166–183 (KFCGLFGDGDSGWCQTFD) are Extracellular-facing. A helical membrane pass occupies residues 184-204 (LITAAWLIFLFMVLCGSSLAL). At 205–227 (LVRILCGSRGLPLTRLYLTILLT) the chain is on the cytoplasmic side. A helical membrane pass occupies residues 228-248 (VLVFLLCGLPFGIQWFLILWI). Topologically, residues 249–263 (WKNSDVLFCHIHPVS) are extracellular. A helical membrane pass occupies residues 264–284 (VVLSSLNSSANPIIYFFVGSF). Residues 285–329 (RKQWQLQQPILKLALQRALQDIAEVDHSEGCFRQGTPEMSRSSLV) lie on the Cytoplasmic side of the membrane.

It belongs to the G-protein coupled receptor 1 family. Mas subfamily.

It localises to the cell membrane. Mast cell-specific receptor for basic secretagogues, i.e. cationic amphiphilic drugs, as well as endo- or exogenous peptides, consisting of a basic head group and a hydrophobic core. Recognizes and binds small molecules containing a cyclized tetrahydroisoquinoline (THIQ), such as non-steroidal neuromuscular blocking drugs (NMBDs), including tubocurarine and atracurium. In response to these compounds, mediates pseudo-allergic reactions characterized by histamine release, inflammation and airway contraction. This Gorilla gorilla gorilla (Western lowland gorilla) protein is Mas-related G-protein coupled receptor member X2 (MRGPRX2).